The primary structure comprises 620 residues: Glutathione-regulated potassium-efflux system protein KefC (620 aa).

The Periplasmic portion of the chain corresponds to 1–3 (MDS). Residues 4 to 24 (HTLVQALIYLGSAALIVPIAV) form a helical membrane-spanning segment. Residue Arg25 is a topological domain, cytoplasmic. Residues 26–46 (LGLGSVLGYLIAGCIIGPWGL) traverse the membrane as a helical segment. The Periplasmic portion of the chain corresponds to 47-53 (RLVTDAE). Residues 54–74 (SILHFAEIGVVLMLFIIGLEL) traverse the membrane as a helical segment. Topologically, residues 75–89 (DPQRLWKLRAAVFGG) are cytoplasmic. A helical membrane pass occupies residues 90–110 (GALQMVICGGLLGLFCMLLGL). Topologically, residues 111 to 113 (RWQ) are periplasmic. Residues 114-134 (VAELIGMTLALSSTAIAMQAM) form a helical membrane-spanning segment. At 135–148 (NERNLMVTQMGRSA) the chain is on the cytoplasmic side. The chain crosses the membrane as a helical span at residues 149–169 (FAVLLFQDIAAIPLVAMIPLL). Residues 170–177 (AASSASTT) lie on the Periplasmic side of the membrane. Residues 178–198 (MGAFALSALKVAGALVLVVLL) traverse the membrane as a helical segment. The Cytoplasmic portion of the chain corresponds to 199-213 (GRYVTRPALRFVARS). Residues 214–233 (GLREVFSAVALFLVFGFGLL) form a helical membrane-spanning segment. The Periplasmic portion of the chain corresponds to 234–236 (LEE). Residues 237–254 (VGLSMAMGAFLAGVLLAS) form a helical membrane-spanning segment. Residues 255-269 (SEYRHALESDIEPFK) lie on the Cytoplasmic side of the membrane. A helical membrane pass occupies residues 270-290 (GLLLGLFFIGVGMSIDFGTLI). Residues 291-293 (ENP) lie on the Periplasmic side of the membrane. The helical transmembrane segment at 294-314 (LRIVILLLGFLIIKIAMLWLI) threads the bilayer. The Cytoplasmic segment spans residues 315-326 (ARPLQVPNKQRR). A helical membrane pass occupies residues 327-347 (WFAVLLGQGSEFAFVVFGAAQ). At 348 to 358 (MANVLEPEWAK) the chain is on the periplasmic side. Residues 359 to 379 (SLTLAVALSMAATPILLVILN) traverse the membrane as a helical segment. The Cytoplasmic segment spans residues 380 to 620 (RLEQSSTEEA…ADEPETKPSS (241 aa)). The RCK N-terminal domain occupies 399–518 (QPRVIIAGFG…AGVEKPERET (120 aa)). The disordered stretch occupies residues 597 to 620 (GWQGTEEGKHTGNMADEPETKPSS).

The protein belongs to the monovalent cation:proton antiporter 2 (CPA2) transporter (TC 2.A.37) family. KefC subfamily. In terms of assembly, homodimer. Interacts with the regulatory subunit KefF.

The protein resides in the cell inner membrane. Functionally, pore-forming subunit of a potassium efflux system that confers protection against electrophiles. Catalyzes K(+)/H(+) antiport. The protein is Glutathione-regulated potassium-efflux system protein KefC of Shigella flexneri.